The chain runs to 1190 residues: Laminin subunit gamma-2 (1190 aa).

A signal peptide spans 1 to 21; the sequence is MPALWLRCGLCLALLLPAARA. Intrachain disulfides connect C28–C37, C30–C53, C56–C65, C68–C81, C84–C96, C86–C102, C104–C113, C116–C128, C139–C150, C141–C155, C157–C166, and C169–C184. 3 Laminin EGF-like domains span residues 28–83, 84–130, and 139–186; these read CDCN…RCLP, CNCN…GCAQ, and CDCD…GCTQ. The 10-residue stretch at 187 to 196 folds into the Laminin EGF-like 4; first part domain; it reads CFCYGHSASC. One can recognise a Laminin IV type A domain in the interval 213 to 381; it reads QDVDGWKAVQ…SGAPAPWVEQ (169 aa). Residues N342 and N362 are each glycosylated (N-linked (GlcNAc...) asparagine). Residues 382-415 enclose the Laminin EGF-like 4; second part domain; that stretch reads CVCPVGYKGQFCQDCASGYKRDSARLGPFGTCIP. Laminin EGF-like domains lie at 416–462, 463–517, and 518–573; these read CNCQ…SCKP, CPCR…PCQP, and CQCN…KCRA. Disulfide bonds link C463–C471, C465–C482, C485–C494, C497–C515, C518–C532, C520–C539, C542–C551, C554–C571, C574–C586, C576–C592, and C594–C603. A Laminin EGF-like 8; truncated domain is found at 574–603; the sequence is CNCNPVGSEPVECRSDGSCVCKPGFGGLSC. Residues 604-1190 are domain II and I; that stretch reads EHAALTSCPA…CYNTQALEQQ (587 aa). Positions 613–718 form a coiled coil; the sequence is ACYNQVKVQM…GSQYQNQVQD (106 aa). Residue S803 is glycosylated (O-linked (Xyl...) (chondroitin sulfate) serine). Coiled coils occupy residues 809 to 1073 and 1114 to 1190; these read AVVQ…AVQM and EERL…LEQQ. Residues N939 and N1030 are each glycosylated (N-linked (GlcNAc...) asparagine).

In terms of assembly, laminin is a complex glycoprotein, consisting of three different polypeptide chains (alpha, beta, gamma), which are bound to each other by disulfide bonds into a cross-shaped molecule comprising one long and three short arms with globules at each end. Gamma-2 is a subunit of laminin-5 (laminin-332 or epiligrin/kalinin/nicein). Post-translationally, O-glycosylated; contains chondroitin sulfate (CS).

Its subcellular location is the secreted. The protein localises to the extracellular space. It localises to the extracellular matrix. The protein resides in the basement membrane. Functionally, binding to cells via a high affinity receptor, laminin is thought to mediate the attachment, migration and organization of cells into tissues during embryonic development by interacting with other extracellular matrix components. Ladsin exerts cell-scattering activity toward a wide variety of cells, including epithelial, endothelial, and fibroblastic cells. The chain is Laminin subunit gamma-2 (LAMC2) from Equus caballus (Horse).